Consider the following 100-residue polypeptide: MTFIRKPAGQAKPQKYSTDAYGRPAGKFRRNGPIRKKVCRFCADKVEIDYKNLSLLHTFVTEKGKILSGRMTGTCAKHQRELDTAIKRARMIALLPFTVN.

A disordered region spans residues 1–23 (MTFIRKPAGQAKPQKYSTDAYGR).

This sequence belongs to the bacterial ribosomal protein bS18 family. In terms of assembly, part of the 30S ribosomal subunit. Forms a tight heterodimer with protein bS6.

Functionally, binds as a heterodimer with protein bS6 to the central domain of the 16S rRNA, where it helps stabilize the platform of the 30S subunit. The polypeptide is Small ribosomal subunit protein bS18 (Endomicrobium trichonymphae).